The sequence spans 149 residues: Large ribosomal subunit protein bL9 (149 aa).

This sequence belongs to the bacterial ribosomal protein bL9 family.

In terms of biological role, binds to the 23S rRNA. The protein is Large ribosomal subunit protein bL9 of Legionella pneumophila (strain Lens).